A 301-amino-acid chain; its full sequence is PWI domain-containing protein C825.05c (301 aa).

Residues 26–137 (STKFPASYDT…YGIPEKFILE (112 aa)) form the PWI domain. At serine 86 the chain carries Phosphoserine. 3 stretches are compositionally biased toward basic and acidic residues: residues 145-182 (LKDRTEASKEESKTVTDHSNRRESRRESTYYDSRERNG), 189-205 (TLDRKRFHDASDTERNR), and 215-229 (RFSEKPRGERYDIRS). The interval 145 to 301 (LKDRTEASKE…ESDSGTQKHD (157 aa)) is disordered. Serine 199 is subject to Phosphoserine. Over residues 244–253 (PTRRRERHYR) the composition is skewed to basic residues. Residues 254–289 (TRDDEGFDEFGRSRDGRWRESRTSYREKHRYDRDAL) show a composition bias toward basic and acidic residues. Positions 290-301 (SSESDSGTQKHD) are enriched in polar residues. Serine 291 carries the phosphoserine modification.

Its subcellular location is the nucleus. In Schizosaccharomyces pombe (strain 972 / ATCC 24843) (Fission yeast), this protein is PWI domain-containing protein C825.05c.